Consider the following 311-residue polypeptide: Olfactory receptor 1L4 (311 aa).

At 1–26 the chain is on the extracellular side; sequence METKNYSSSTSGFILLGLSSNPKLQK. N-linked (GlcNAc...) asparagine glycosylation is present at Asn5. The helical transmembrane segment at 27-50 threads the bilayer; the sequence is PLFAIFLIMYLLTAVGNVLIILAI. At 51–58 the chain is on the cytoplasmic side; that stretch reads YSDPRLHT. A helical membrane pass occupies residues 59 to 80; it reads PMYFFLSNLSFMDICFTTVIVP. Residues 81–101 are Extracellular-facing; the sequence is KMLVNFLSETKIISYVGCLIQ. The cysteines at positions 98 and 190 are disulfide-linked. The helical transmembrane segment at 102–121 threads the bilayer; the sequence is MYFFMAFGNTDSYLLASMAI. Residues 122-140 lie on the Cytoplasmic side of the membrane; that stretch reads DRLVAICNPLHYDVVMKPW. The helical transmembrane segment at 141–159 threads the bilayer; sequence HCLLMLLGSCSISHLHSLF. Over 160 to 197 the chain is Extracellular; sequence RVLLMSRLSFCASHIIKHFFCDTQPVLKLSCSDTSSSQ. A helical transmembrane segment spans residues 198–220; that stretch reads MVVMTETLAVIVTPFLCTIFSYL. Residues 221 to 237 lie on the Cytoplasmic side of the membrane; the sequence is QIIVTVLRIPSAAGKWK. A helical membrane pass occupies residues 238 to 260; the sequence is AFSTCGSHLTVVVLFYGSVIYVY. Over 261–273 the chain is Extracellular; the sequence is FRPLSMYSVMKGR. A helical membrane pass occupies residues 274-293; sequence VATVMYTVVTPMLNPFIYSL. Residues 294 to 311 are Cytoplasmic-facing; it reads RNKDMKRGLKKLRHRIYS.

Belongs to the G-protein coupled receptor 1 family.

It localises to the cell membrane. Functionally, odorant receptor. This is Olfactory receptor 1L4 (OR1L4) from Homo sapiens (Human).